The chain runs to 197 residues: Transmembrane protein 126A (197 aa).

Residues 1-35 (MENHEPDGTIIKENLTDIIARKINQLPEAERNLLE) are Mitochondrial matrix-facing. The chain crosses the membrane as a helical span at residues 36 to 56 (NGSTYVGLNAALCGLIANSLF). At 57-58 (RR) the chain is on the mitochondrial intermembrane side. Residues 59–79 (ILHVTQARIAAGLPMAVIPFL) form a helical membrane-spanning segment. The Mitochondrial matrix portion of the chain corresponds to 80–107 (TANVSYKGFVSLPLNTGDLQCETCTVTR). A helical membrane pass occupies residues 108-128 (GGLVGLVFGGLYPVFLAIPVN). The Mitochondrial intermembrane segment spans residues 129–160 (GGLAARYNSALLPEKGNILNYWIRISKPVFRK). A helical membrane pass occupies residues 161-177 (MLFPILLQTGFAAYLGS). The Mitochondrial matrix segment spans residues 178-197 (RQYKLLIKALQLPEPGLEIE).

It belongs to the TMEM126 family. As to quaternary structure, interacts with OXA1L; promoting cotranslational quality control in mitochondria.

It is found in the mitochondrion inner membrane. Functionally, protein required for the cotranslational protein quality control in the inner membrane of the mitochondria. Associates with newly synthesized polypeptides and may act as a chaperone that cooperates with OXA1L for the insertion of newly synthesized mitochondrial proteins into the inner membrane. Required for the assembly of the ND4 module of mitochondrial complex I. The protein is Transmembrane protein 126A (TMEM126A) of Bos taurus (Bovine).